A 198-amino-acid polypeptide reads, in one-letter code: tRNA (pseudouridine(54)-N(1))-methyltransferase (198 aa).

S-adenosyl-L-methionine-binding positions include leucine 130, glycine 153, 176-181 (LSPLEL), and cysteine 186.

Belongs to the methyltransferase superfamily. TrmY family. Homodimer.

The protein localises to the cytoplasm. It catalyses the reaction pseudouridine(54) in tRNA + S-adenosyl-L-methionine = N(1)-methylpseudouridine(54) in tRNA + S-adenosyl-L-homocysteine + H(+). Its function is as follows. Specifically catalyzes the N1-methylation of pseudouridine at position 54 (Psi54) in tRNAs. The protein is tRNA (pseudouridine(54)-N(1))-methyltransferase of Methanococcus maripaludis (strain C7 / ATCC BAA-1331).